Consider the following 372-residue polypeptide: Aminomethyltransferase (372 aa).

It belongs to the GcvT family. The glycine cleavage system is composed of four proteins: P, T, L and H.

It catalyses the reaction N(6)-[(R)-S(8)-aminomethyldihydrolipoyl]-L-lysyl-[protein] + (6S)-5,6,7,8-tetrahydrofolate = N(6)-[(R)-dihydrolipoyl]-L-lysyl-[protein] + (6R)-5,10-methylene-5,6,7,8-tetrahydrofolate + NH4(+). The glycine cleavage system catalyzes the degradation of glycine. This Streptomyces coelicolor (strain ATCC BAA-471 / A3(2) / M145) protein is Aminomethyltransferase.